The primary structure comprises 348 residues: uncharacterized protein (348 aa).

The signal sequence occupies residues Met-1–Lys-26.

This is an uncharacterized protein from Bacillus subtilis (strain 168).